Consider the following 466-residue polypeptide: DNA polymerase delta subunit 3 (466 aa).

Alanine 2 carries the N-acetylalanine modification. Disordered regions lie at residues 145 to 218 (PAES…KEVM) and 255 to 466 (EQEV…FQRK). Composition is skewed to basic and acidic residues over residues 205–218 (DANK…KEVM), 255–265 (EQEVKEEKKVE), and 281–297 (DLKK…MQQK). Lysine 259 participates in a covalent cross-link: Glycyl lysine isopeptide (Lys-Gly) (interchain with G-Cter in SUMO); alternate. Lysine 259 participates in a covalent cross-link: Glycyl lysine isopeptide (Lys-Gly) (interchain with G-Cter in SUMO2); alternate. A Glycyl lysine isopeptide (Lys-Gly) (interchain with G-Cter in SUMO2) cross-link involves residue lysine 262. Residue serine 308 is modified to Phosphoserine. Residues 350 to 360 (PSPPPPSPSPE) show a composition bias toward pro residues. Phosphoserine occurs at positions 407 and 409. Threonine 411 is subject to Phosphothreonine. At serine 413 the chain carries Phosphoserine. The span at 432–441 (VKKEPKEERK) shows a compositional bias: basic and acidic residues. A Glycyl lysine isopeptide (Lys-Gly) (interchain with G-Cter in SUMO); alternate cross-link involves residue lysine 433. Residue lysine 433 forms a Glycyl lysine isopeptide (Lys-Gly) (interchain with G-Cter in SUMO2); alternate linkage. A PIP-box motif is present at residues 456–463 (QVAITGFF).

In terms of assembly, component of both the DNA polymerase delta and DNA polymerase zeta complexes. The tetrameric DNA polymerase delta complex (Pol-delta4), which consists of POLD1/p125, POLD2/p50, POLD3/p66/p68 and POLD4/p12, with POLD1 bearing DNA polymerase and 3' to 5' proofreading exonuclease activities. Within this complex, directly interacts with POLD2. Following stress caused by DNA damaging agents or by replication stress, POLD4 is degraded and Pol-delta4 is converted into a trimeric form of the complex (Pol-delta3), which consists of POLD1, POLD2 and POLD3. Pol-delta3 is the major form occurring at S phase replication sites, as well as DNA damage sites. Directly interacts with PCNA, as do POLD1 and POLD4; this interaction stimulates Pol-delta polymerase activity. Component of the DNA polymerase zeta complex (POLZ), which consists of REV3L, MAD2L2, POLD2 and POLD3, with REV3L bearing DNA polymerase catalytic activity. The DNA polymerase delta complex interacts with POLDIP2; this interaction is probably mediated through direct binding to POLD2. Ubiquitinated, but not targeted to the proteasome. Sumoylated. Sumoylation by SUMO3 may be predominant.

It localises to the cytoplasm. The protein localises to the nucleus. Its function is as follows. Accessory component of both the DNA polymerase delta complex and the DNA polymerase zeta complex. As a component of the trimeric and tetrameric DNA polymerase delta complexes (Pol-delta3 and Pol-delta4, respectively), plays a role in high fidelity genome replication, including in lagging strand synthesis, and repair. Required for optimal Pol-delta activity. Stabilizes the Pol-delta complex and plays a major role in Pol-delta stimulation by PCNA. Pol-delta3 and Pol-delta4 are characterized by the absence or the presence of POLD4. They exhibit differences in catalytic activity. Most notably, Pol-delta3 shows higher proofreading activity than Pol-delta4. Although both Pol-delta3 and Pol-delta4 process Okazaki fragments in vitro, Pol-delta3 may also be better suited to fulfill this task, exhibiting near-absence of strand displacement activity compared to Pol-delta4 and stalling on encounter with the 5'-blocking oligonucleotides. Pol-delta3 idling process may avoid the formation of a gap, while maintaining a nick that can be readily ligated. Along with DNA polymerase kappa, DNA polymerase delta carries out approximately half of nucleotide excision repair (NER) synthesis following UV irradiation. In this context, POLD3, along with PCNA and RFC1-replication factor C complex, is required to recruit POLD1, the catalytic subunit of the polymerase delta complex, to DNA damage sites. Under conditions of DNA replication stress, required for the repair of broken replication forks through break-induced replication (BIR). Involved in the translesion synthesis (TLS) of templates carrying O6-methylguanine or abasic sites performed by Pol-delta4, independently of DNA polymerase zeta (REV3L) or eta (POLH). Facilitates abasic site bypass by DNA polymerase delta by promoting extension from the nucleotide inserted opposite the lesion. Also involved in TLS, as a component of the tetrameric DNA polymerase zeta complex. Along with POLD2, dramatically increases the efficiency and processivity of DNA synthesis of the DNA polymerase zeta complex compared to the minimal zeta complex, consisting of only REV3L and REV7. The chain is DNA polymerase delta subunit 3 (POLD3) from Bos taurus (Bovine).